A 287-amino-acid polypeptide reads, in one-letter code: Cbb3-type cytochrome c oxidase subunit FixPc (287 aa).

Topologically, residues 1–36 (MSEKHIDEFSGVETTGHEWDGIRELNNPMPRWWVWT) are cytoplasmic. Residues 37-57 (FYATIVWALGYAIAYPAIPMI) form a helical membrane-spanning segment. The Periplasmic portion of the chain corresponds to 58–287 (TDATKGMLGF…IFVHSLGGGT (230 aa)). Cytochrome c domains lie at 108–196 (FAIA…WGLT) and 203–284 (GLAE…HSLG). The heme c site is built by Cys121, Cys124, His125, Met173, Cys216, Cys219, His220, and Met261.

The protein belongs to the CcoP / FixP family. As to quaternary structure, component of the cbb3-type cytochrome c oxidase at least composed of FixN, FixO, FixQ and FixP. Heme c serves as cofactor.

The protein localises to the cell inner membrane. Its pathway is energy metabolism; oxidative phosphorylation. Its function is as follows. C-type cytochrome. Part of the cbb3-type cytochrome c oxidase complex. FixP subunit is required for transferring electrons from donor cytochrome c via its heme groups to FixO subunit. From there, electrons are shuttled to the catalytic binuclear center of FixN subunit where oxygen reduction takes place. The complex also functions as a proton pump. This Rhizobium leguminosarum bv. viciae protein is Cbb3-type cytochrome c oxidase subunit FixPc.